The chain runs to 182 residues: MSRIGKRPITIPAKVQVAINGTNIVVKGPKGELSRTLRDNVSLSQEGEILHVNRRDETRTSKQLHGLSRTLVANMVEGVSQGFQRRLEIQGVGYRAQLQGRNLVLNMGYSHQVQIEPPDGIQFAVEGTTNVIVSGYDKEIVGNTAAKIRAVRPPEPYKGKGIRYAGEVVRRKAGKTGKGGKK.

This sequence belongs to the universal ribosomal protein uL6 family. Part of the 50S ribosomal subunit.

In terms of biological role, this protein binds to the 23S rRNA, and is important in its secondary structure. It is located near the subunit interface in the base of the L7/L12 stalk, and near the tRNA binding site of the peptidyltransferase center. The sequence is that of Large ribosomal subunit protein uL6 from Nostoc punctiforme (strain ATCC 29133 / PCC 73102).